Reading from the N-terminus, the 352-residue chain is Proton-activated chloride channel (352 aa).

A disordered region spans residues 1–55; it reads MEAIRKELSRSYQELNEEAEPVAIDPEEAEDEEKEQEEAASAVAPDRDSDRSSPP. Residues 1–65 lie on the Cytoplasmic side of the membrane; that stretch reads MEAIRKELSR…VRFSRTCLKN (65 aa). Acidic residues predominate over residues 15-38; the sequence is LNEEAEPVAIDPEEAEDEEKEQEE. A helical transmembrane segment spans residues 66–86; it reads FFSVLLILVYLLLMGVAVFLV. The Extracellular segment spans residues 87 to 299; that stretch reads YQTITDFRDK…KDPYIQEIQD (213 aa). A helical membrane pass occupies residues 300 to 320; it reads IITANPWSMIALLCSVFLVLF. At 321–352 the chain is on the cytoplasmic side; that stretch reads KAADFAKLSVKWMIKVRRRHLKKRARELNHIS.

The protein belongs to the proton-activated chloride channel family.

The protein localises to the cell membrane. It catalyses the reaction chloride(in) = chloride(out). In terms of biological role, chloride channel gated by pH that facilitates the entry of chloride ions into cells upon exposure to extracellular acidic pH. This Xenopus tropicalis (Western clawed frog) protein is Proton-activated chloride channel.